We begin with the raw amino-acid sequence, 230 residues long: Large ribosomal subunit protein uL1 (230 aa).

It belongs to the universal ribosomal protein uL1 family. Part of the 50S ribosomal subunit.

Binds directly to 23S rRNA. The L1 stalk is quite mobile in the ribosome, and is involved in E site tRNA release. Functionally, protein L1 is also a translational repressor protein, it controls the translation of the L11 operon by binding to its mRNA. This is Large ribosomal subunit protein uL1 from Sulfurimonas denitrificans (strain ATCC 33889 / DSM 1251) (Thiomicrospira denitrificans (strain ATCC 33889 / DSM 1251)).